Reading from the N-terminus, the 812-residue chain is Protein FAM83G (812 aa).

Alanine 2 carries the N-acetylalanine modification. A DUF1669 region spans residues 2 to 312 (AFSQVQCLDD…LYLMSQSVSL (311 aa)). A Phosphoserine modification is found at serine 4. The disordered stretch occupies residues 76–119 (PGSEDPRVSGRRPEPQDNGGADASEETSAAGGPPATETLPSLEY). Basic and acidic residues predominate over residues 79–90 (EDPRVSGRRPEP). A phosphoserine mark is found at serine 124, serine 127, and serine 356. Disordered regions lie at residues 362–389 (KSSS…GDLS), 455–509 (ASAQ…KPRT), and 521–812 (SDIG…HKEP). Positions 455–467 (ASAQHQLWKQSQG) are enriched in polar residues. The span at 471 to 480 (CPAPCPPPAP) shows a compositional bias: pro residues. A compositionally biased stretch (polar residues) spans 545–562 (STASESEVPQQQHSSMTQ). A compositionally biased stretch (acidic residues) spans 576-586 (LDEDEDDDDDY). Low complexity predominate over residues 589 to 598 (LSDQDSLSGS). Phosphoserine occurs at positions 609, 613, 615, and 649. The segment covering 721–731 (SSSKKASPAAA) has biased composition (low complexity). The span at 761–772 (LRAELRATEEHA) shows a compositional bias: basic and acidic residues.

It belongs to the FAM83 family. Interacts with SMAD1 (via MH2 domain); in a SMAD4-independent manner. Directly interacts (via DUF1669) with casein kinase isoforms CSNK1A1 and CSNK1A1L. In terms of processing, BMP signaling induces the phosphorylation by BMPR1A at Ser-609, Ser-613 and Ser-615. Phosphorylation at Ser-609 is necessary for the activation of SMAD4-independent BMP target genes such as NEDD9 and ASNS. Post-translationally, phosphorylated by CSNK1A1.

It is found in the cytoplasm. The protein resides in the cytosol. The protein localises to the nucleus. Its function is as follows. Substrate for type I BMP receptor kinase involved in regulation of some target genes of the BMP signaling pathway. Also regulates the expression of several non-BMP target genes, suggesting a role in other signaling pathways. This Mus musculus (Mouse) protein is Protein FAM83G (Fam83g).